Here is a 55-residue protein sequence, read N- to C-terminus: Large ribosomal subunit protein bL33 (55 aa).

Over residues 1–11 the composition is skewed to basic and acidic residues; that stretch reads MAKGGREKIKL. Residues 1–29 are disordered; it reads MAKGGREKIKLESSAGTGHFYTTSKNKRT. Residues 14–24 show a composition bias toward polar residues; the sequence is SAGTGHFYTTS.

It belongs to the bacterial ribosomal protein bL33 family.

The polypeptide is Large ribosomal subunit protein bL33 (Polynucleobacter asymbioticus (strain DSM 18221 / CIP 109841 / QLW-P1DMWA-1) (Polynucleobacter necessarius subsp. asymbioticus)).